The following is a 107-amino-acid chain: MAWTYIMRQSDLPPGEMQRHEGGPEPVMVCNVDGEFFAVQDTCTHGNWALSDGYLDGGVVECTLHFGKFCVRTGKVKALPACKPIKVFPIKVEGGDVHVDLDAGEVK.

Positions 4–99 constitute a Rieske domain; the sequence is TYIMRQSDLP…IKVEGGDVHV (96 aa). Residues Cys43, His45, Cys62, and His65 each coordinate [2Fe-2S] cluster.

This sequence belongs to the bacterial ring-hydroxylating dioxygenase ferredoxin component family. As to quaternary structure, this dioxygenase system consists of four proteins: the two subunits of the oxygenase component (TecA1 and TecA2), a ferredoxin (TecA3) and a ferredoxin reductase (TecA4). [2Fe-2S] cluster serves as cofactor.

The protein operates within aromatic compound metabolism. Functionally, part of the chlorobenzene dioxygenase system that catalyzes the dihydroxylation of a range of aromatic compounds, including chlorinated benzenes and toluenes, and dinuclear aromatics such as biphenyl and dibenzo-p-dioxin. The chain is Chlorobenzene dioxygenase, ferredoxin component from Cupriavidus sp. (strain PS12).